The chain runs to 249 residues: Probable transcriptional regulatory protein ACIAD2052 (249 aa).

Belongs to the TACO1 family.

The protein resides in the cytoplasm. This Acinetobacter baylyi (strain ATCC 33305 / BD413 / ADP1) protein is Probable transcriptional regulatory protein ACIAD2052.